Here is a 496-residue protein sequence, read N- to C-terminus: Cyclin-dependent kinase 16 (496 aa).

The tract at residues 1-95 (MDRMKKIKRQ…SATSSDEVQS (95 aa)) is disordered. Residue serine 12 is modified to Phosphoserine; by BRSK2. A phosphoserine mark is found at serine 36, serine 42, serine 64, serine 65, serine 78, serine 82, and serine 89. Over residues 69–78 (IVHEDMKMGS) the composition is skewed to basic and acidic residues. Positions 83-93 (DQASATSSDEV) are enriched in polar residues. The residue at position 95 (serine 95) is a Phosphoserine; by CDK5. Residues serine 110, serine 119, serine 138, serine 146, serine 153, and serine 155 each carry the phosphoserine modification. The 282-residue stretch at 165 to 446 (YIKLDKLGEG…AEDARKHPFF (282 aa)) folds into the Protein kinase domain. Residues 171-179 (LGEGTYATV) and lysine 194 contribute to the ATP site. At threonine 175 the chain carries Phosphothreonine. The Proton acceptor role is filled by aspartate 286. The residue at position 380 (threonine 380) is a Phosphothreonine. Serine 391, serine 478, and serine 480 each carry phosphoserine.

Belongs to the protein kinase superfamily. CMGC Ser/Thr protein kinase family. CDC2/CDKX subfamily. Found in a complex containing CABLES1, CDK17 and TDRD7. Interacts with BRSK2. Identified in a complex with NSF, syntaxin-1, synaptotagmin, SYN1, SYP and CDK5R1. Interacts with YWHAH, YWHAQ and YWHAZ. Interacts with CCNY; this interaction increases the CDK16 kinase activity. Interacts with CCNYL1; this interaction mutually increases the stability of CDK16 and CCNYL1 and increases the kinase activity of CDK16. Interacts with NSF. Post-translationally, phosphorylation of CDK16 is essential for the binding of CCNY, but also essential for the regulation of CDK16 kinase activity. Phosphorylation of CDK16 is essential for the binding of CCNYl1, but also essential for the regulation of CDK16 kinase activity. Ser-146 and Ser-153 are the critical sites for the binding of CCNYL1 and for modulating CDK16 kinase activity. Phosphorylation at Ser-153 inhibits kinase activity. Highly expressed in testis and brain, and detected at lower levels in heart, skeletal muscle, adipose tissue, lung, spleen and pancreas (at protein level). Ubiquitous with highest levels in testis and brain, with longer form predominant in all tissues except the testis.

It is found in the cytoplasm. It localises to the cytoplasmic vesicle. Its subcellular location is the secretory vesicle. The protein resides in the cell membrane. The protein localises to the synapse. It is found in the synaptosome. It catalyses the reaction L-seryl-[protein] + ATP = O-phospho-L-seryl-[protein] + ADP + H(+). The enzyme catalyses L-threonyl-[protein] + ATP = O-phospho-L-threonyl-[protein] + ADP + H(+). In terms of biological role, protein kinase that plays a role in vesicle-mediated transport processes and exocytosis. Can phosphorylate CCNY at 'Ser-336' (in vitro). Plays a role in the regulation of insulin secretion in response to changes in blood glucose levels. Regulates GH1 release by brain neurons. Phosphorylates NSF, and thereby regulates NSF oligomerization. Required for normal spermatogenesis. Regulates neuron differentiation and dendrite development. The sequence is that of Cyclin-dependent kinase 16 (Cdk16) from Mus musculus (Mouse).